The chain runs to 85 residues: ATP synthase subunit c (85 aa).

Transmembrane regions (helical) follow at residues 10–30 (GLALLGKYLGAGLCMGIGAIG) and 65–85 (AVAETTGIYSLLIAFMILLVV).

Belongs to the ATPase C chain family. F-type ATPases have 2 components, F(1) - the catalytic core - and F(0) - the membrane proton channel. F(1) has five subunits: alpha(3), beta(3), gamma(1), delta(1), epsilon(1). F(0) has three main subunits: a(1), b(2) and c(10-14). The alpha and beta chains form an alternating ring which encloses part of the gamma chain. F(1) is attached to F(0) by a central stalk formed by the gamma and epsilon chains, while a peripheral stalk is formed by the delta and b chains.

It is found in the cell inner membrane. Functionally, f(1)F(0) ATP synthase produces ATP from ADP in the presence of a proton or sodium gradient. F-type ATPases consist of two structural domains, F(1) containing the extramembraneous catalytic core and F(0) containing the membrane proton channel, linked together by a central stalk and a peripheral stalk. During catalysis, ATP synthesis in the catalytic domain of F(1) is coupled via a rotary mechanism of the central stalk subunits to proton translocation. Key component of the F(0) channel; it plays a direct role in translocation across the membrane. A homomeric c-ring of between 10-14 subunits forms the central stalk rotor element with the F(1) delta and epsilon subunits. The protein is ATP synthase subunit c of Thermotoga maritima (strain ATCC 43589 / DSM 3109 / JCM 10099 / NBRC 100826 / MSB8).